Reading from the N-terminus, the 241-residue chain is Triosephosphate isomerase (241 aa).

Substrate is bound at residue 9–11; the sequence is NWK. The Electrophile role is filled by His96. Glu165 functions as the Proton acceptor in the catalytic mechanism. Substrate contacts are provided by residues Gly171, Ser204, and 225–226; that span reads GG.

The protein belongs to the triosephosphate isomerase family. As to quaternary structure, homodimer.

It localises to the cytoplasm. The enzyme catalyses D-glyceraldehyde 3-phosphate = dihydroxyacetone phosphate. The protein operates within carbohydrate biosynthesis; gluconeogenesis. Its pathway is carbohydrate degradation; glycolysis; D-glyceraldehyde 3-phosphate from glycerone phosphate: step 1/1. Its function is as follows. Involved in the gluconeogenesis. Catalyzes stereospecifically the conversion of dihydroxyacetone phosphate (DHAP) to D-glyceraldehyde-3-phosphate (G3P). The chain is Triosephosphate isomerase from Acaryochloris marina (strain MBIC 11017).